The sequence spans 281 residues: CLA biosynthesis isomerase (281 aa).

The protein belongs to the ADC family.

It is found in the cytoplasm. It carries out the reaction 10-oxo-(12Z)-octadecenoate = 10-oxo-(11E)-octadecenoate. Its pathway is lipid metabolism; fatty acid metabolism. Functionally, is involved in a saturation metabolic pathway of polyunsaturated fatty acids, that detoxifies unsaturated fatty acids and generates hydroxy fatty acids, oxo fatty acids, conjugated fatty acids such as conjugated linoleic acids (CLAs), and partially saturated trans-fatty acids as intermediates. CLA-DC catalyzes the migration of the carbon-carbon double bond in 10-oxo-(12Z)-octadecenoate to produce 10-oxo-(11E)-octadecenoate, during linoleate metabolism. As part of the gut microbiome, this enzyme modifies host fatty acid composition and is expected to improve human health by altering lipid metabolism related to the onset of metabolic syndrome. The chain is CLA biosynthesis isomerase from Lactiplantibacillus plantarum (Lactobacillus plantarum).